Reading from the N-terminus, the 209-residue chain is 60S ribosomal subunit assembly/export protein loc-1 (209 aa).

2 disordered regions span residues 1–53 (MAPT…SKGR) and 135–209 (REAR…AAPE). Composition is skewed to basic and acidic residues over residues 20–33 (GSKD…DGVL) and 135–159 (REAR…TKDS). Positions 126 to 170 (IKARQMEEIREARRAEAEKKEAERKARLEETKDSLRKKRKRSKQS) form a coiled coil.

Belongs to the LOC1 family. Component of the 66S pre-ribosomal particle.

The protein localises to the nucleus. It localises to the nucleolus. In terms of biological role, required for efficient assembly and nuclear export of the 60S ribosomal subunit. In Neurospora crassa (strain ATCC 24698 / 74-OR23-1A / CBS 708.71 / DSM 1257 / FGSC 987), this protein is 60S ribosomal subunit assembly/export protein loc-1 (loc-1).